Consider the following 408-residue polypeptide: Argininosuccinate synthase (408 aa).

ATP contacts are provided by residues 8–16 and Ala-35; that span reads AYSGGLDTT. Residues Tyr-86 and Ser-91 each coordinate L-citrulline. Gly-116 lines the ATP pocket. Thr-118, Asn-122, and Asp-123 together coordinate L-aspartate. Position 122 (Asn-122) interacts with L-citrulline. L-citrulline is bound by residues Arg-126, Ser-177, Ser-186, Glu-263, and Tyr-275.

The protein belongs to the argininosuccinate synthase family. Type 1 subfamily. Homotetramer.

The protein resides in the cytoplasm. The catalysed reaction is L-citrulline + L-aspartate + ATP = 2-(N(omega)-L-arginino)succinate + AMP + diphosphate + H(+). Its pathway is amino-acid biosynthesis; L-arginine biosynthesis; L-arginine from L-ornithine and carbamoyl phosphate: step 2/3. This is Argininosuccinate synthase from Lachnospira eligens (strain ATCC 27750 / DSM 3376 / VPI C15-48 / C15-B4) (Eubacterium eligens).